Reading from the N-terminus, the 445-residue chain is Exodeoxyribonuclease 7 large subunit (445 aa).

This sequence belongs to the XseA family. Heterooligomer composed of large and small subunits.

The protein resides in the cytoplasm. The catalysed reaction is Exonucleolytic cleavage in either 5'- to 3'- or 3'- to 5'-direction to yield nucleoside 5'-phosphates.. Functionally, bidirectionally degrades single-stranded DNA into large acid-insoluble oligonucleotides, which are then degraded further into small acid-soluble oligonucleotides. In Shewanella oneidensis (strain ATCC 700550 / JCM 31522 / CIP 106686 / LMG 19005 / NCIMB 14063 / MR-1), this protein is Exodeoxyribonuclease 7 large subunit.